Consider the following 228-residue polypeptide: PKHD-type hydroxylase YbiX (228 aa).

The 100-residue stretch at T78–S177 folds into the Fe2OG dioxygenase domain. The Fe cation site is built by H96, D98, and H158. Residue R168 coordinates 2-oxoglutarate.

Fe(2+) is required as a cofactor. The cofactor is L-ascorbate.

The chain is PKHD-type hydroxylase YbiX from Escherichia coli O157:H7.